The primary structure comprises 500 residues: MTLTATMVVDKSFKIGEIDKRIYGSFIEHLGRAVYEGIYEPGHPDGDEQGFRKDVIRLVQELQVPLVRYPGGNFVSGYNWEDGVGPVSERPKRLDLAWRTTETNEIGTNEFVDWAKKVGAEVNMAVNLGSRGVDAARNLVEYCNHPSGSYWSDLRISHGYKDPHNIKTWCLGNEMDGPWQIGQKTAEEYGRVAAEAGKVMKLVDPSIELVACGSSNSKMATFADWEATVLDHTYDYVDYISLHTYYGNRDDDLANYLAQSMDMDEFIRSVIAIADYVKAKKRSKKTIHLSFDEWNVWFHSNEADRQITPWSVAPPLLEDIYTFEDALLVGSMLITLLKHADRVKIACLAQLVNVIAPIMTEKGGPAWKQTIFYPYMHASVYGRGVALQAQISSPKYDSKDFTDVPYLDAAVVHLEEAEEVTIFAVNKHQTESLNLQCDMRSFEGYHVLEHIVLEHENMKATNQGREQVTPHHNGDSAIDQGRLTANLAKLSWNVIRLGKK.

Alpha-L-arabinofuranose-binding residues include glutamate 28, asparagine 73, and asparagine 173. Glutamate 174 serves as the catalytic Proton donor/acceptor. Alpha-L-arabinofuranose-binding residues include tyrosine 245, glutamate 293, and glutamine 350. Glutamate 293 functions as the Nucleophile in the catalytic mechanism.

The protein belongs to the glycosyl hydrolase 51 family. In terms of assembly, homohexamer; trimer of dimers.

The protein localises to the cytoplasm. It catalyses the reaction Hydrolysis of terminal non-reducing alpha-L-arabinofuranoside residues in alpha-L-arabinosides.. Its pathway is glycan metabolism; L-arabinan degradation. In terms of biological role, involved in the degradation of arabinan and is a key enzyme in the complete degradation of the plant cell wall. Catalyzes the cleavage of terminal alpha-(1-&gt;5)-arabinofuranosyl bonds in different hemicellulosic homopolysaccharides (branched and debranched arabinans). This Halalkalibacterium halodurans (strain ATCC BAA-125 / DSM 18197 / FERM 7344 / JCM 9153 / C-125) (Bacillus halodurans) protein is Intracellular exo-alpha-(1-&gt;5)-L-arabinofuranosidase (abfA).